A 325-amino-acid chain; its full sequence is Fructose-1,6-bisphosphatase class 1 (325 aa).

Residues glutamate 84, aspartate 103, leucine 105, and aspartate 106 each coordinate Mg(2+). Substrate-binding positions include 106–109 (DGSS), asparagine 196, and lysine 262. Mg(2+) is bound at residue glutamate 268.

It belongs to the FBPase class 1 family. In terms of assembly, homotetramer. Requires Mg(2+) as cofactor.

The protein localises to the cytoplasm. The catalysed reaction is beta-D-fructose 1,6-bisphosphate + H2O = beta-D-fructose 6-phosphate + phosphate. It participates in carbohydrate biosynthesis; gluconeogenesis. This chain is Fructose-1,6-bisphosphatase class 1, found in Shewanella oneidensis (strain ATCC 700550 / JCM 31522 / CIP 106686 / LMG 19005 / NCIMB 14063 / MR-1).